The sequence spans 304 residues: Bacteriochlorophyll synthase 33 kDa chain (304 aa).

9 consecutive transmembrane segments (helical) span residues 26–46 (VTWFPPMWAYLCGAVSSNVPI), 51–71 (GVVVLGIVLAGPIVCGMSQAA), 94–114 (IPGLWGLYIAIAMSLLSLVVG), 117–137 (LGSWGFVATLLGVAAAWAYSV), 151–171 (GLVGLAYEGLPWITGAAVLLA), 178–198 (GFPIVMMATLYALGAHGIMTI), 227–247 (IACTVMGLAQALVITMLYLFS), 250–270 (YHATAVLVLLCGQFWAMSVWM), and 279–299 (WYNGTGVVMYVSGMMITAFAI).

The protein localises to the cell membrane. The protein operates within porphyrin-containing compound metabolism; bacteriochlorophyll biosynthesis (light-independent). Catalyzes the esterification of bacteriochlorophyllide a by geranylgeraniol-PPi. The polypeptide is Bacteriochlorophyll synthase 33 kDa chain (bchG) (Rhodobacter capsulatus (strain ATCC BAA-309 / NBRC 16581 / SB1003)).